The primary structure comprises 415 residues: Small RNA 2'-O-methyltransferase (415 aa).

Residues S99 and D117 each coordinate S-adenosyl-L-methionine. 3 residues coordinate Mg(2+): E169, E172, and H173.

It belongs to the methyltransferase superfamily. HEN1 family. Requires Mg(2+) as cofactor.

It localises to the cytoplasm. It catalyses the reaction small RNA 3'-end nucleotide + S-adenosyl-L-methionine = small RNA 3'-end 2'-O-methylnucleotide + S-adenosyl-L-homocysteine + H(+). Functionally, methyltransferase that adds a 2'-O-methyl group at the 3'-end of piRNAs, a class of 24 to 30 nucleotide RNAs that are generated by a Dicer-independent mechanism and are primarily derived from transposons and other repeated sequence elements. This probably protects the 3'-end of piRNAs from uridylation activity and subsequent degradation. Stabilization of piRNAs is essential for gametogenesis. The sequence is that of Small RNA 2'-O-methyltransferase from Bombyx mori (Silk moth).